Consider the following 404-residue polypeptide: Caspase b (404 aa).

Residues M1–Q171 constitute a propeptide that is removed on maturation. Residues L8 to A80 form the Pyrin domain. Active-site residues include H249 and C296. The propeptide occupies S301 to W316.

Belongs to the peptidase C14A family. Upon direct LPS-binding, forms large homooligomers, resulting in its activation. These oligomers are often referred to as 'non-canonical inflammasomes'. Heterotetramer that consists of two anti-parallel arranged heterodimers, each one formed by a 20 kDa (p20) and a 10 kDa (p10) subunit. Interacts with caspa. Interacts with pycard; the interaction only occurs in the presence of nlrp1. Component of NLRP1 inflammasomes. Inflammasomes are supramolecular complexes that assemble in the cytosol in response to pathogens and other damage-associated signals and play critical roles in innate immunity and inflammation. The NLRP1 inflammasome is composed of the signal sensor nlrp1, and the adapter pycard (asc), which recruit effector pro-inflammatory caspases caspa and/or caspb. The interaction between nlrp1 and pycard is required for the sequential recruitment of caspa and then caspb. Caspa is preferentially recruited first and this causes the cleavage of pro-il1b into the midformed il1b. This is followed by the recruitment of caspb, which is activated and cleaves the midformed il1b resulting in il1b maturation. The two subunits are derived from the precursor sequence by an autocatalytic mechanism. Expressed in the spleen, kidney and liver, and highly expressed in the gills and gut.

It is found in the inflammasome. The protein localises to the cytoplasm. The enzyme catalyses Strict requirement for Asp at the P1 position. It has a preferred cleavage sequence of Tyr-Val-Ala-Asp-|- but also cleaves at Asp-Glu-Val-Asp-|-.. With respect to regulation, activated by homooligomerization induced by direct binding to cytosolic LPS. Thiol protease which cleaves IL-1 beta (il1b), releasing the mature cytokine which is involved in a variety of inflammatory processes, and mediates apoptosis. Component of the NLRP1 inflammasome, which plays a crucial role in innate immunity and inflammation. In response to pathogens and other damage-associated signals, recruited to the NLRP1 inflammasome in its precursor form following the recruitment of caspase caspa. Its subsequent activation causes the cleavage of the midformed pro-il1b and results in il1b maturation and secretion in the extracellular milieu. Activated by direct binding to bacterial lipopolysaccharides (LPS), which causes non-canonical inflammasome activation and results in the pyroptosis of infected cells and their extrusion into the gut lumen, as well as in cytokine secretion. Plays a crucial role in the restriction of bacterial infection to intestinal sites. Pyroptosis limits bacterial replication, while cytokine secretion promotes the recruitment and activation of immune cells and triggers mucosal inflammation. Promotes pyroptosis by bacterial infection by E.piscicida. The polypeptide is Caspase b (Danio rerio (Zebrafish)).